The following is a 286-amino-acid chain: ATP synthase gamma chain (286 aa).

The protein belongs to the ATPase gamma chain family. F-type ATPases have 2 components, CF(1) - the catalytic core - and CF(0) - the membrane proton channel. CF(1) has five subunits: alpha(3), beta(3), gamma(1), delta(1), epsilon(1). CF(0) has three main subunits: a, b and c.

It localises to the cell inner membrane. Produces ATP from ADP in the presence of a proton gradient across the membrane. The gamma chain is believed to be important in regulating ATPase activity and the flow of protons through the CF(0) complex. This Marinomonas sp. (strain MWYL1) protein is ATP synthase gamma chain.